The primary structure comprises 1483 residues: Protein ORF C (1483 aa).

Disordered stretches follow at residues 135–268, 306–334, 383–506, 518–653, 680–911, 949–976, 1013–1061, and 1089–1299; these read LNDR…GRPP, VPYQNQTRRSRPQGDNEVPPPTEGDLRPV, RRRA…FKRH, SIDD…DRNR, RQRR…TSVS, SSDDGGESGLECLRTPAPTRKTGGRGGS, ALQQ…TDLI, and FSVA…QPSD. The segment covering 141–153 has biased composition (low complexity); that stretch reads AAGSAQRGSAGSR. The segment covering 157–170 has biased composition (polar residues); it reads DNLTPTAADTTGAQ. 2 stretches are compositionally biased toward low complexity: residues 190-206 and 220-251; these read ASNVQQQAAAAALRRQQ and ARQQQPQQPARPPQTTETQTSNNSNTNNTTAT. A compositionally biased stretch (polar residues) spans 252-264; that stretch reads RQVFEQQGPSTIQ. Composition is skewed to low complexity over residues 424–449, 474–483, and 529–541; these read SGQSSVSQQQPIQTSNVITTDTTTGT, SNEPSRQSQS, and TMTQSGTTSSTTR. Polar residues predominate over residues 596–607; the sequence is GSVTTTQPSGQL. The span at 609–621 shows a compositional bias: basic and acidic residues; it reads SDDRGRPAPERRQ. The segment covering 622–640 has biased composition (polar residues); sequence QPTSRQTVAQTNIIPNTSG. Positions 680-689 are enriched in basic and acidic residues; that stretch reads RQRRETEAEH. Over residues 699–710 the composition is skewed to polar residues; the sequence is TGVTPQRSNNPF. A compositionally biased stretch (basic and acidic residues) spans 740–749; the sequence is SLREYRRRDP. The span at 754-774 shows a compositional bias: low complexity; the sequence is GRSYTDGSTTSDGDSSDNSWS. The segment covering 841–876 has biased composition (polar residues); the sequence is NLKSPSPRTKLTRSSSLKSPGTTTRDTQQTSHPLTR. The segment covering 894–909 has biased composition (low complexity); it reads DSGGSSDGNTGSSQTS. Composition is skewed to polar residues over residues 1096–1109 and 1116–1125; these read GSTSQSVQKPSSIP and GPSTMTSQSV. Low complexity predominate over residues 1148–1158; sequence SQSQPSSEQPA. The span at 1188–1202 shows a compositional bias: polar residues; it reads QPQSTVTNTQTQDVL. 2 stretches are compositionally biased toward low complexity: residues 1204-1226 and 1233-1251; these read SQGSSKTTQQTTSSTQKSSKTGS and KSALSKTKSSTSDTASGKS. Over residues 1258-1276 the composition is skewed to polar residues; that stretch reads AASSTDPTTKPTRKVSINA. A compositionally biased stretch (low complexity) spans 1284–1299; it reads KSSTKQSTKTSTQPSD. Positions 1408–1438 form a coiled coil; that stretch reads AEQIRNLEVDELKILRQQVRERIANERQQQD. The segment at 1454–1483 is disordered; the sequence is DMLVSEESAAPTPLPMDTGRFTPKSDVDMS.

The chain is Protein ORF C from Elephantid herpesvirus 1 (isolate Asian elephant/Berlin/Kiba/1998) (EIHV-1).